Reading from the N-terminus, the 694-residue chain is Elongation factor G (694 aa).

The tr-type G domain occupies 9-288 (DAIRNIGIMA…VIVKWLPSPL (280 aa)). Residues 18-25 (AHIDAGKT), 82-86 (DTPGH), and 136-139 (NKMD) each bind GTP.

This sequence belongs to the TRAFAC class translation factor GTPase superfamily. Classic translation factor GTPase family. EF-G/EF-2 subfamily.

It is found in the cytoplasm. Its function is as follows. Catalyzes the GTP-dependent ribosomal translocation step during translation elongation. During this step, the ribosome changes from the pre-translocational (PRE) to the post-translocational (POST) state as the newly formed A-site-bound peptidyl-tRNA and P-site-bound deacylated tRNA move to the P and E sites, respectively. Catalyzes the coordinated movement of the two tRNA molecules, the mRNA and conformational changes in the ribosome. In Chlamydia trachomatis serovar L2 (strain ATCC VR-902B / DSM 19102 / 434/Bu), this protein is Elongation factor G.